A 274-amino-acid chain; its full sequence is Urease accessory protein UreD (274 aa).

Belongs to the UreD family. UreD, UreF and UreG form a complex that acts as a GTP-hydrolysis-dependent molecular chaperone, activating the urease apoprotein by helping to assemble the nickel containing metallocenter of UreC. The UreE protein probably delivers the nickel.

Its subcellular location is the cytoplasm. In terms of biological role, required for maturation of urease via the functional incorporation of the urease nickel metallocenter. This Klebsiella pneumoniae subsp. pneumoniae (strain ATCC 700721 / MGH 78578) protein is Urease accessory protein UreD.